We begin with the raw amino-acid sequence, 180 residues long: Negative modulator of initiation of replication (180 aa).

Interaction with DNA regions lie at residues 86–87 (AV), 115–119 (RTRVY), and 149–155 (NTNTGRK).

This sequence belongs to the SeqA family. Homodimer. Polymerizes to form helical filaments.

The protein resides in the cytoplasm. Its function is as follows. Negative regulator of replication initiation, which contributes to regulation of DNA replication and ensures that replication initiation occurs exactly once per chromosome per cell cycle. Binds to pairs of hemimethylated GATC sequences in the oriC region, thus preventing assembly of replication proteins and re-initiation at newly replicated origins. Repression is relieved when the region becomes fully methylated. The sequence is that of Negative modulator of initiation of replication from Enterobacter sp. (strain 638).